A 102-amino-acid polypeptide reads, in one-letter code: Large ribosomal subunit protein eL30 (102 aa).

Belongs to the eukaryotic ribosomal protein eL30 family. As to quaternary structure, part of the 50S ribosomal subunit.

This chain is Large ribosomal subunit protein eL30, found in Thermococcus kodakarensis (strain ATCC BAA-918 / JCM 12380 / KOD1) (Pyrococcus kodakaraensis (strain KOD1)).